We begin with the raw amino-acid sequence, 137 residues long: BolA-like protein 1 (137 aa).

S81 is subject to Phosphoserine. The tract at residues 114-137 is disordered; it reads WGENSQLDTSPPCLGGNKKTLGTP.

Belongs to the BolA/IbaG family. Interacts with GLRX5.

Its subcellular location is the mitochondrion. Acts as a mitochondrial iron-sulfur (Fe-S) cluster assembly factor that facilitates (Fe-S) cluster insertion into a subset of mitochondrial proteins. Probably acts together with the monothiol glutaredoxin GLRX5. May protect cells against oxidative stress. This is BolA-like protein 1 (BOLA1) from Pongo abelii (Sumatran orangutan).